A 1003-amino-acid chain; its full sequence is MASMTMRFHPNSTAVTESVPRRGSVYGFIGYRSSSLFVRTNVIKYRSVKRNLEFRRRSAFSVKCGSGNEAKQKVKDQEVQQEAKTSPSSFAPDTTSIVSSIKYHAEFTPLFSPEKFELPQAFIATAQSVRDALIINWNATYDYYEKLNVKQAYYLSMEFLQGRALLNAIGNLELTGPYAEALSQLSYKLEDVAHQEPDAALGNGGLGRLASCFLDSLATLNYPAWGYGLRYKYGLFKQRITKDGQEEVAEDWLEMGNPWEIVRNDVSYPVRFYGKVVSGSDGKKHWVGGEDIKAVAHDVPIPGYKTRSTINLRLWSTKAASEEFDLNAFNSGRHTEASEALANAEKICYILYPGDESIEGKTLRLKQQYTLCSASLQDIIARFERRSGASVNWEDFPEKVAVQMNDTHPTLCIPELMRILIDIKGLSWKDAWNITQRTVAYTNHTVLPEALEKWSMDLMEKLLPRHVEIIEMIDEELIRTIIAEYGTADSDLLDKKLKEMRILENVELPAEFADILVKTKEATDISSEEVQISKEGGEEEETSKEGGEEEEEKEVGGGREEGDDGKEDEVEKAIAEKDGTVKSSIGDKKKKLPEPVPVPPKLVRMANLCVVGGHAVNGVAEIHSEIVKDDVFNAFYKLWPEKFQNKTNGVTPRRWIRFCNPDLSKIITQWIGTEDWILNTEKLAELRKFADNEDLQTQWREAKRNNKVKVAAFLRERTGYSVSPDSMFDIQVKRIHEYKRQLLNIFGIVYRYKKMKEMNAAERKENFVPRVCIFGGKAFATYVQAKRIVKFITDVGATVNHDPEIGDLLKVIFVPDYNVSVAEMLIPASELSQHISTAGMEASGTSNMKFAMNGCLQIGTLDGANVEIREEVGADNFFLFGAKAREIVGLRKERARGKFVPDPRFEEVKKFVRSGVFGSYNYDELIGSLEGNEGFGRADYFLVGQDFPSYLECQEEVDKAYRDQKKWTRMSILNTAGSSKFSSDRTIHEYAREIWNIEPVKLE.

A chloroplast-targeting transit peptide spans 1-64 (MASMTMRFHP…RRRSAFSVKC (64 aa)). 2 disordered regions span residues 71-91 (KQKV…SSFA) and 526-593 (SSEE…KKLP). Residues 537-553 (GEEEETSKEGGEEEEEK) show a composition bias toward acidic residues. A compositionally biased stretch (basic and acidic residues) spans 569 to 580 (EVEKAIAEKDGT). Lys849 carries the N6-(pyridoxal phosphate)lysine modification.

Belongs to the glycogen phosphorylase family. The cofactor is pyridoxal 5'-phosphate. Found predominantly in cotyledons and early seed coat.

It is found in the plastid. It localises to the chloroplast. Its subcellular location is the amyloplast. It carries out the reaction [(1-&gt;4)-alpha-D-glucosyl](n) + phosphate = [(1-&gt;4)-alpha-D-glucosyl](n-1) + alpha-D-glucose 1-phosphate. Its function is as follows. Phosphorylase is an important allosteric enzyme in carbohydrate metabolism. Enzymes from different sources differ in their regulatory mechanisms and in their natural substrates. However, all known phosphorylases share catalytic and structural properties. Functionally, the L isoform exhibits higher affinity for unbranched substrates such as glucan-like amylose and maltodextrin. The sequence is that of Alpha-1,4 glucan phosphorylase L isozyme, chloroplastic/amyloplastic (PHO1) from Vicia faba (Broad bean).